Consider the following 191-residue polypeptide: UPF0149 protein VC_2476 (191 aa).

Belongs to the UPF0149 family.

This is UPF0149 protein VC_2476 from Vibrio cholerae serotype O1 (strain ATCC 39315 / El Tor Inaba N16961).